The chain runs to 349 residues: S-adenosylmethionine:tRNA ribosyltransferase-isomerase (349 aa).

The protein belongs to the QueA family. Monomer.

The protein localises to the cytoplasm. It carries out the reaction 7-aminomethyl-7-carbaguanosine(34) in tRNA + S-adenosyl-L-methionine = epoxyqueuosine(34) in tRNA + adenine + L-methionine + 2 H(+). It participates in tRNA modification; tRNA-queuosine biosynthesis. In terms of biological role, transfers and isomerizes the ribose moiety from AdoMet to the 7-aminomethyl group of 7-deazaguanine (preQ1-tRNA) to give epoxyqueuosine (oQ-tRNA). This is S-adenosylmethionine:tRNA ribosyltransferase-isomerase from Pseudomonas fluorescens (strain SBW25).